Consider the following 614-residue polypeptide: Phosphomethylpyrimidine synthase (614 aa).

Residues Asn-230, Met-259, Tyr-288, His-324, 344–346 (SRG), 385–388 (DGLR), and Glu-424 each bind substrate. Residue His-428 coordinates Zn(2+). Tyr-451 is a substrate binding site. His-492 is a Zn(2+) binding site. [4Fe-4S] cluster contacts are provided by Cys-572, Cys-575, and Cys-580.

It belongs to the ThiC family. Homodimer. It depends on [4Fe-4S] cluster as a cofactor.

It catalyses the reaction 5-amino-1-(5-phospho-beta-D-ribosyl)imidazole + S-adenosyl-L-methionine = 4-amino-2-methyl-5-(phosphooxymethyl)pyrimidine + CO + 5'-deoxyadenosine + formate + L-methionine + 3 H(+). It functions in the pathway cofactor biosynthesis; thiamine diphosphate biosynthesis. Catalyzes the synthesis of the hydroxymethylpyrimidine phosphate (HMP-P) moiety of thiamine from aminoimidazole ribotide (AIR) in a radical S-adenosyl-L-methionine (SAM)-dependent reaction. In Stenotrophomonas maltophilia (strain K279a), this protein is Phosphomethylpyrimidine synthase.